Here is a 191-residue protein sequence, read N- to C-terminus: Signal peptidase complex catalytic subunit sec11 (191 aa).

The Cytoplasmic segment spans residues 1-18 (MLSALGGNLSNARQSIAQ). Residues 19–39 (VLNFALVLSTAFMLWKGVSIA) form a helical; Signal-anchor for type II membrane protein membrane-spanning segment. Over 40-191 (SNSSSPIVVV…MGLMVILQRE (152 aa)) the chain is Lumenal. N-linked (GlcNAc...) asparagine glycosylation is present at N41. Residues S53, H92, and D133 each act as charge relay system in the active site. Positions 177-188 (VLLGVMGLMVIL) are C-terminal short (CTS) helix.

Belongs to the peptidase S26B family. In terms of assembly, component of the signal peptidase complex (SPC) composed of a catalytic subunit SEC11 and three accessory subunits SPC1, SPC2 and SPC3. The complex induces a local thinning of the ER membrane which is used to measure the length of the signal peptide (SP) h-region of protein substrates. This ensures the selectivity of the complex towards h-regions shorter than 18-20 amino acids. SPC associates with the translocon complex.

Its subcellular location is the endoplasmic reticulum membrane. The catalysed reaction is Cleavage of hydrophobic, N-terminal signal or leader sequences from secreted and periplasmic proteins.. Catalytic component of the signal peptidase complex (SPC) which catalyzes the cleavage of N-terminal signal sequences from nascent proteins as they are translocated into the lumen of the endoplasmic reticulum. Specifically cleaves N-terminal signal peptides that contain a hydrophobic alpha-helix (h-region) shorter than 18-20 amino acids. This is Signal peptidase complex catalytic subunit sec11 (sec11) from Talaromyces marneffei (strain ATCC 18224 / CBS 334.59 / QM 7333) (Penicillium marneffei).